We begin with the raw amino-acid sequence, 276 residues long: Putative pyruvate, phosphate dikinase regulatory protein 2 (276 aa).

G146–T153 is a binding site for ADP.

The protein belongs to the pyruvate, phosphate/water dikinase regulatory protein family. PDRP subfamily.

It catalyses the reaction N(tele)-phospho-L-histidyl/L-threonyl-[pyruvate, phosphate dikinase] + ADP = N(tele)-phospho-L-histidyl/O-phospho-L-threonyl-[pyruvate, phosphate dikinase] + AMP + H(+). It carries out the reaction N(tele)-phospho-L-histidyl/O-phospho-L-threonyl-[pyruvate, phosphate dikinase] + phosphate + H(+) = N(tele)-phospho-L-histidyl/L-threonyl-[pyruvate, phosphate dikinase] + diphosphate. Bifunctional serine/threonine kinase and phosphorylase involved in the regulation of the pyruvate, phosphate dikinase (PPDK) by catalyzing its phosphorylation/dephosphorylation. The protein is Putative pyruvate, phosphate dikinase regulatory protein 2 of Enterococcus faecalis (strain ATCC 700802 / V583).